The chain runs to 67 residues: Putative cytosolic sulfotransferase 2 (67 aa).

31 to 33 (RDG) lines the 3'-phosphoadenylyl sulfate pocket.

This sequence belongs to the sulfotransferase 1 family.

The protein localises to the cytoplasm. Sulfotransferase that utilizes 3'-phospho-5'-adenylyl sulfate (PAPS) as sulfonate donor. The sequence is that of Putative cytosolic sulfotransferase 2 (SOT2) from Arabidopsis thaliana (Mouse-ear cress).